Here is a 457-residue protein sequence, read N- to C-terminus: Cysteine--tRNA ligase (457 aa).

Cys-27 serves as a coordination point for Zn(2+). The short motif at 29–39 (ITPQSEPHIGH) is the 'HIGH' region element. Residues Cys-207, His-232, and Glu-236 each contribute to the Zn(2+) site. Positions 265–269 (KMSKS) match the 'KMSKS' region motif. Lys-268 lines the ATP pocket.

It belongs to the class-I aminoacyl-tRNA synthetase family. Monomer. The cofactor is Zn(2+).

The protein localises to the cytoplasm. The catalysed reaction is tRNA(Cys) + L-cysteine + ATP = L-cysteinyl-tRNA(Cys) + AMP + diphosphate. The sequence is that of Cysteine--tRNA ligase from Dehalococcoides mccartyi (strain ATCC BAA-2100 / JCM 16839 / KCTC 5957 / BAV1).